The following is a 432-amino-acid chain: Glutamate-1-semialdehyde 2,1-aminomutase (432 aa).

An N6-(pyridoxal phosphate)lysine modification is found at Lys272.

It belongs to the class-III pyridoxal-phosphate-dependent aminotransferase family. HemL subfamily. As to quaternary structure, homodimer. Requires pyridoxal 5'-phosphate as cofactor.

Its subcellular location is the cytoplasm. The enzyme catalyses (S)-4-amino-5-oxopentanoate = 5-aminolevulinate. It participates in porphyrin-containing compound metabolism; protoporphyrin-IX biosynthesis; 5-aminolevulinate from L-glutamyl-tRNA(Glu): step 2/2. The protein operates within porphyrin-containing compound metabolism; chlorophyll biosynthesis. The chain is Glutamate-1-semialdehyde 2,1-aminomutase from Acaryochloris marina (strain MBIC 11017).